The chain runs to 414 residues: Serine hydroxymethyltransferase (414 aa).

Residues L121 and 125–127 (GHL) contribute to the (6S)-5,6,7,8-tetrahydrofolate site. The residue at position 230 (K230) is an N6-(pyridoxal phosphate)lysine.

The protein belongs to the SHMT family. Homodimer. Requires pyridoxal 5'-phosphate as cofactor.

It is found in the cytoplasm. It carries out the reaction (6R)-5,10-methylene-5,6,7,8-tetrahydrofolate + glycine + H2O = (6S)-5,6,7,8-tetrahydrofolate + L-serine. It participates in one-carbon metabolism; tetrahydrofolate interconversion. It functions in the pathway amino-acid biosynthesis; glycine biosynthesis; glycine from L-serine: step 1/1. Functionally, catalyzes the reversible interconversion of serine and glycine with tetrahydrofolate (THF) serving as the one-carbon carrier. This reaction serves as the major source of one-carbon groups required for the biosynthesis of purines, thymidylate, methionine, and other important biomolecules. Also exhibits THF-independent aldolase activity toward beta-hydroxyamino acids, producing glycine and aldehydes, via a retro-aldol mechanism. The protein is Serine hydroxymethyltransferase of Acidithiobacillus ferrooxidans (strain ATCC 23270 / DSM 14882 / CIP 104768 / NCIMB 8455) (Ferrobacillus ferrooxidans (strain ATCC 23270)).